The following is a 217-amino-acid chain: Putative 3-methyladenine DNA glycosylase (217 aa).

Residues 105–145 (SHNNVYTIDTAKIKSQITDEKTQSIIIRKNRRIMKFYIPNL) form the RPE2 insert domain.

The protein belongs to the DNA glycosylase MPG family.

The polypeptide is Putative 3-methyladenine DNA glycosylase (Rickettsia prowazekii (strain Madrid E)).